The primary structure comprises 157 residues: Glycine-rich RNA-binding, abscisic acid-inducible protein (157 aa).

In terms of domain architecture, RRM spans 8-86 (YRCFVGGLAW…RNITVNQAQS (79 aa)). Positions 82 to 157 (NQAQSRGGGG…YGGGGGGWRD (76 aa)) are disordered. Residues 87–157 (RGGGGGGGGY…YGGGGGGWRD (71 aa)) show a composition bias toward gly residues.

Its function is as follows. Possibly has a role in RNA transcription or processing during stress. The chain is Glycine-rich RNA-binding, abscisic acid-inducible protein (RAB15) from Zea mays (Maize).